The primary structure comprises 476 residues: Glutamate--tRNA ligase (476 aa).

Residues 9–19 (PSPTGTLHIGT) carry the 'HIGH' region motif. A 'KMSKS' region motif is present at residues 248–252 (KLSKR). Position 251 (Lys-251) interacts with ATP.

The protein belongs to the class-I aminoacyl-tRNA synthetase family. Glutamate--tRNA ligase type 1 subfamily. As to quaternary structure, monomer.

The protein resides in the cytoplasm. It carries out the reaction tRNA(Glu) + L-glutamate + ATP = L-glutamyl-tRNA(Glu) + AMP + diphosphate. Functionally, catalyzes the attachment of glutamate to tRNA(Glu) in a two-step reaction: glutamate is first activated by ATP to form Glu-AMP and then transferred to the acceptor end of tRNA(Glu). The chain is Glutamate--tRNA ligase from Prochlorococcus marinus (strain MIT 9313).